The chain runs to 372 residues: Putative isochorismate synthase MenF (372 aa).

The active-site Proton acceptor is the K119. Residue E175 is the Proton donor of the active site. 2 residues coordinate Mg(2+): E219 and E356.

This sequence belongs to the isochorismate synthase family. It depends on Mg(2+) as a cofactor.

It catalyses the reaction chorismate = isochorismate. It functions in the pathway quinol/quinone metabolism; 1,4-dihydroxy-2-naphthoate biosynthesis; 1,4-dihydroxy-2-naphthoate from chorismate: step 1/7. The protein operates within quinol/quinone metabolism; menaquinone biosynthesis. Its function is as follows. Catalyzes the conversion of chorismate to isochorismate. The chain is Putative isochorismate synthase MenF (menF) from Mycobacterium tuberculosis (strain CDC 1551 / Oshkosh).